The primary structure comprises 469 residues: MTQDSALLQAPEPMLRDGSNSRKVFIKTYGCQMNVYDSTRMSDALARDGYEPTEDMEEADLVLLNTCHIREKAAEKVYSALGRLREMKKKKAADGREMMIGVTGCVAQAEGEEILRRAPAVDVVIGPQTYHRLPEALRRAQQGQRVVDTEYAIEDKFEHLPIAESRKIRARGVTAFLTVQEGCDKFCTFCVVPYTRGSEVSRPVSQIVEEAEKLVEAGVREITLLGQNVNAWHGAGPRGEAWSLGDLLYRLAEIPGLARLRYTTSHPRDMDDRLIEAHRDLRALMPYLHLPVQSGSDRILKAMNRRHTAAEYLSLIERIRTVRPDIALSGDFITGFPGETDADFEDTLRLVEEVRYAQAFSFKYSTRPGTPGAELKDQVPEEIKAERLERLQALLLKQQQEFAESCIGKEIDLLLEKPGRMPGQLIGRSPWLQSVNVDAKASQIGDIIKVRITGTGTNSLFAERAEAAV.

The MTTase N-terminal domain maps to 22–142; the sequence is RKVFIKTYGC…LPEALRRAQQ (121 aa). Residues C31, C67, C105, C183, C187, and C190 each contribute to the [4Fe-4S] cluster site. Positions 169–401 constitute a Radical SAM core domain; it reads RARGVTAFLT…QALLLKQQQE (233 aa). Residues 404–466 enclose the TRAM domain; it reads ESCIGKEIDL…TNSLFAERAE (63 aa).

The protein belongs to the methylthiotransferase family. MiaB subfamily. In terms of assembly, monomer. The cofactor is [4Fe-4S] cluster.

It is found in the cytoplasm. The catalysed reaction is N(6)-dimethylallyladenosine(37) in tRNA + (sulfur carrier)-SH + AH2 + 2 S-adenosyl-L-methionine = 2-methylsulfanyl-N(6)-dimethylallyladenosine(37) in tRNA + (sulfur carrier)-H + 5'-deoxyadenosine + L-methionine + A + S-adenosyl-L-homocysteine + 2 H(+). Functionally, catalyzes the methylthiolation of N6-(dimethylallyl)adenosine (i(6)A), leading to the formation of 2-methylthio-N6-(dimethylallyl)adenosine (ms(2)i(6)A) at position 37 in tRNAs that read codons beginning with uridine. The polypeptide is tRNA-2-methylthio-N(6)-dimethylallyladenosine synthase (Rhizobium etli (strain CIAT 652)).